Reading from the N-terminus, the 468-residue chain is mRNA cleavage and polyadenylation factor CLP1 (468 aa).

The interval 1 to 22 is disordered; sequence MLSLPGLNLAPQPAEPLNAPTS. ATP contacts are provided by residues E35, K74, and 138 to 143; that span reads HSGKTS.

It belongs to the Clp1 family. Clp1 subfamily. Component of a pre-mRNA cleavage factor complex. Interacts directly with PCF11.

It is found in the nucleus. Its function is as follows. Required for endonucleolytic cleavage during polyadenylation-dependent pre-mRNA 3'-end formation. The protein is mRNA cleavage and polyadenylation factor CLP1 of Phaeosphaeria nodorum (strain SN15 / ATCC MYA-4574 / FGSC 10173) (Glume blotch fungus).